The chain runs to 322 residues: TATA box-binding protein-like 2 (322 aa).

The segment at 31 to 54 (PALSSTQDSTYLSGRAGPSRESGA) is disordered. The segment covering 32–42 (ALSSTQDSTYL) has biased composition (polar residues).

This sequence belongs to the TBP family.

The protein localises to the nucleus. Its function is as follows. TATA box-binding transcription factor. Members of the TBP family are differentially required to regulate transcription and development during early embryogenesis. In Takifugu rubripes (Japanese pufferfish), this protein is TATA box-binding protein-like 2.